Reading from the N-terminus, the 227-residue chain is Orotate phosphoribosyltransferase (227 aa).

Lysine 34 provides a ligand contact to 5-phospho-alpha-D-ribose 1-diphosphate. Position 42-43 (42-43) interacts with orotate; that stretch reads FF. Residues 80–81, arginine 106, lysine 107, lysine 110, histidine 112, and 131–139 contribute to the 5-phospho-alpha-D-ribose 1-diphosphate site; these read YK and DDVISAGTS. Orotate is bound by residues serine 135 and arginine 163.

This sequence belongs to the purine/pyrimidine phosphoribosyltransferase family. PyrE subfamily. In terms of assembly, homodimer. It depends on Mg(2+) as a cofactor.

It catalyses the reaction orotidine 5'-phosphate + diphosphate = orotate + 5-phospho-alpha-D-ribose 1-diphosphate. It functions in the pathway pyrimidine metabolism; UMP biosynthesis via de novo pathway; UMP from orotate: step 1/2. Its function is as follows. Catalyzes the transfer of a ribosyl phosphate group from 5-phosphoribose 1-diphosphate to orotate, leading to the formation of orotidine monophosphate (OMP). The sequence is that of Orotate phosphoribosyltransferase from Cupriavidus necator (strain ATCC 17699 / DSM 428 / KCTC 22496 / NCIMB 10442 / H16 / Stanier 337) (Ralstonia eutropha).